A 735-amino-acid chain; its full sequence is 5-methyltetrahydropteroyltriglutamate--homocysteine methyltransferase (735 aa).

Residues 15 to 18 (REFK) and lysine 104 contribute to the 5-methyltetrahydropteroyltri-L-glutamate site. L-homocysteine contacts are provided by residues 409 to 411 (IGS) and glutamate 462. L-methionine contacts are provided by residues 409-411 (IGS) and glutamate 462. Residues 493 to 494 (RC) and tryptophan 539 contribute to the 5-methyltetrahydropteroyltri-L-glutamate site. Aspartate 577 contacts L-homocysteine. Aspartate 577 contacts L-methionine. Glutamate 583 provides a ligand contact to 5-methyltetrahydropteroyltri-L-glutamate. Zn(2+) contacts are provided by histidine 618, cysteine 620, and glutamate 642. The active-site Proton donor is histidine 672. Position 704 (cysteine 704) interacts with Zn(2+).

This sequence belongs to the vitamin-B12 independent methionine synthase family. It depends on Zn(2+) as a cofactor.

It carries out the reaction 5-methyltetrahydropteroyltri-L-glutamate + L-homocysteine = tetrahydropteroyltri-L-glutamate + L-methionine. Its pathway is amino-acid biosynthesis; L-methionine biosynthesis via de novo pathway; L-methionine from L-homocysteine (MetE route): step 1/1. Its function is as follows. Catalyzes the transfer of a methyl group from 5-methyltetrahydrofolate to homocysteine resulting in methionine formation. This is 5-methyltetrahydropteroyltriglutamate--homocysteine methyltransferase from Thermotoga petrophila (strain ATCC BAA-488 / DSM 13995 / JCM 10881 / RKU-1).